Consider the following 812-residue polypeptide: Phospholipase D alpha 2 (812 aa).

The propeptide occupies 1-36; it reads MAQHLLHGTLHATIYEVDALHTGGLRSAGFLGKIIS. In terms of domain architecture, C2 spans 1–127; it reads MAQHLLHGTL…INGEEVEKWV (127 aa). Positions 328–368 constitute a PLD phosphodiesterase 1 domain; that stretch reads AMFTHHQKIVVVDSEVPSQGGGSEMRRIMSFVGGIDLCDGR. Active-site residues include H333, K335, and D340. H333 contributes to the a 1,2-diacyl-sn-glycero-3-phosphate binding site. Position 374 (H374) interacts with Ca(2+). 2 residues coordinate a 1,2-diacyl-sn-glycero-3-phosphate: Q524 and H663. The 28-residue stretch at 658-685 folds into the PLD phosphodiesterase 2 domain; that stretch reads FMIYVHSKMMIVDDEYIIVGSANINQRS. Catalysis depends on residues H663, K665, and D670. E724 contacts Ca(2+).

The protein belongs to the phospholipase D family. C2-PLD subfamily. Ca(2+) is required as a cofactor.

It localises to the cytoplasm. The protein resides in the membrane. The catalysed reaction is a 1,2-diacyl-sn-glycero-3-phosphocholine + H2O = a 1,2-diacyl-sn-glycero-3-phosphate + choline + H(+). Functionally, hydrolyzes glycerol-phospholipids at the terminal phosphodiesteric bond. Plays an important role in various cellular processes, including phytohormone action, vesicular trafficking, secretion, cytoskeletal arrangement, meiosis, tumor promotion, pathogenesis, membrane deterioration and senescence. The sequence is that of Phospholipase D alpha 2 (PLD2) from Brassica oleracea var. capitata (Cabbage).